The following is a 301-amino-acid chain: Ornithine carbamoyltransferase (301 aa).

Carbamoyl phosphate is bound by residues Arg-107 and 134 to 137 (HPLQ). Residues Asn-165, Asp-220, and 224–225 (SM) contribute to the L-ornithine site. Residues 260-261 (CL) and Arg-288 each bind carbamoyl phosphate.

This sequence belongs to the aspartate/ornithine carbamoyltransferase superfamily. OTCase family. Homotrimer.

The protein resides in the cytoplasm. The catalysed reaction is carbamoyl phosphate + L-ornithine = L-citrulline + phosphate + H(+). Its pathway is amino-acid biosynthesis; L-arginine biosynthesis; L-arginine from L-ornithine and carbamoyl phosphate: step 1/3. Inhibited by delta-N-phosphonoacetyl-L-ornithine. In terms of biological role, reversibly catalyzes the transfer of the carbamoyl group from carbamoyl phosphate (CP) to the N(epsilon) atom of ornithine (ORN) to produce L-citrulline, which is a substrate for argininosuccinate synthetase, the enzyme involved in the final step in arginine biosynthesis. The sequence is that of Ornithine carbamoyltransferase from Thermus thermophilus (strain ATCC BAA-163 / DSM 7039 / HB27).